The primary structure comprises 287 residues: Co-chaperone protein DjlA (287 aa).

Residues 1-6 (MNFIGK) are Periplasmic-facing. The chain crosses the membrane as a helical span at residues 7–30 (FLGLIIGWKLGGFFGAICGVILGH). Topologically, residues 31–287 (LGDKKLYELG…DLICKTKGWK (257 aa)) are cytoplasmic. Positions 221 to 287 (DAYKVLGVSA…DLICKTKGWK (67 aa)) constitute a J domain.

Homodimer.

Its subcellular location is the cell inner membrane. Functionally, regulatory DnaK co-chaperone. Direct interaction between DnaK and DjlA is needed for the induction of the wcaABCDE operon, involved in the synthesis of a colanic acid polysaccharide capsule, possibly through activation of the RcsB/RcsC phosphotransfer signaling pathway. The colanic acid capsule may help the bacterium survive conditions outside the host. The chain is Co-chaperone protein DjlA from Pasteurella multocida (strain Pm70).